The sequence spans 667 residues: Probable sulfate permease C320.05 (667 aa).

The interval 1 to 27 (MSSPSENHLLGPKTSFIDNRTSTSRPL) is disordered. Positions 16–25 (FIDNRTSTSR) are enriched in polar residues. The next 12 helical transmembrane spans lie at 77-97 (IIWD…IALS), 102-122 (FLGV…ILYC), 162-182 (ILVT…AGLF), 198-218 (GCIL…FFGF), 240-260 (MSKA…LLIG), 275-295 (IVSI…SKKF), 301-321 (YGIA…LPLP), 336-356 (GVMC…AISL), 368-388 (LISL…PICG), 405-425 (VATI…MPVF), 433-453 (LASM…VEIF), and 465-485 (GIIF…GIIF). In terms of domain architecture, STAS spans 532–657 (SSTAVESAPR…DHVQDSIKKV (126 aa)).

The protein belongs to the SLC26A/SulP transporter (TC 2.A.53) family.

It is found in the endoplasmic reticulum membrane. In terms of biological role, possible sulfate transporter. The polypeptide is Probable sulfate permease C320.05 (Schizosaccharomyces pombe (strain 972 / ATCC 24843) (Fission yeast)).